Here is an 85-residue protein sequence, read N- to C-terminus: Progonadoliberin-2 (85 aa).

The first 23 residues, 1–23 (MCVSRLALLLGLLLCVGAQLSFA), serve as a signal peptide directing secretion. Gln-24 carries the post-translational modification Pyrrolidone carboxylic acid. Gly-33 bears the Glycine amide mark.

Belongs to the GnRH family. Expressed in only one cell group in the mesencephalon.

Its subcellular location is the secreted. Its function is as follows. Stimulates the secretion of gonadotropins. This is Progonadoliberin-2 (gnrh2) from Haplochromis burtoni (Burton's mouthbrooder).